A 328-amino-acid chain; its full sequence is Glycerol-3-phosphate dehydrogenase [NAD(P)+] (328 aa).

Positions 15, 35, 36, and 105 each coordinate NADPH. Positions 105 and 131 each coordinate sn-glycerol 3-phosphate. Residue A135 coordinates NADPH. K186, D239, S249, R250, and N251 together coordinate sn-glycerol 3-phosphate. The active-site Proton acceptor is K186. Residue R250 participates in NADPH binding. V270 and E272 together coordinate NADPH.

Belongs to the NAD-dependent glycerol-3-phosphate dehydrogenase family.

The protein resides in the cytoplasm. The enzyme catalyses sn-glycerol 3-phosphate + NAD(+) = dihydroxyacetone phosphate + NADH + H(+). It carries out the reaction sn-glycerol 3-phosphate + NADP(+) = dihydroxyacetone phosphate + NADPH + H(+). It participates in membrane lipid metabolism; glycerophospholipid metabolism. Catalyzes the reduction of the glycolytic intermediate dihydroxyacetone phosphate (DHAP) to sn-glycerol 3-phosphate (G3P), the key precursor for phospholipid synthesis. The sequence is that of Glycerol-3-phosphate dehydrogenase [NAD(P)+] from Deinococcus radiodurans (strain ATCC 13939 / DSM 20539 / JCM 16871 / CCUG 27074 / LMG 4051 / NBRC 15346 / NCIMB 9279 / VKM B-1422 / R1).